The sequence spans 268 residues: Movement protein (268 aa).

The segment at 216 to 238 (KKSDVRKGKNSSSVRSVPNKNYR) is disordered. Polar residues predominate over residues 225 to 237 (NSSSVRSVPNKNY).

The protein belongs to the tobamovirus movement protein family. As to quaternary structure, binds to host RBCS at the plasmodesmata; this interaction seems required for viral systemic movement. In resistant plants, interacts with host MBP2C at host microtubules; this interaction prevents virus cell to cell movement. In resistant plants, interacts with host resistance (R) protein (e.g. tomato ToMV resistance protein TM-2(2), AC Q71BG9) at the host plasma membrane; this interaction triggers host defense responses leading to programmed cell death.

Its subcellular location is the host cytoplasm. It localises to the host cytoskeleton. It is found in the host cell junction. The protein localises to the host plasmodesma. Functionally, transports viral genome to neighboring plant cells directly through plasmosdesmata, without any budding. The movement protein allows efficient cell to cell propagation, by bypassing the host cell wall barrier. Forms a ribonucleoprotein complex with viral RNA. Binds microtubules and modulates microtubule stability. Can bind double-stranded DNA. Triggers host hypersensitive defense reaction in incompatible plants harboring resistance (R) proteins. This chain is Movement protein (MP), found in Nicotiana tabacum (Common tobacco).